Here is a 249-residue protein sequence, read N- to C-terminus: tRNA (guanine-N(1)-)-methyltransferase (249 aa).

S-adenosyl-L-methionine is bound by residues Gly-113 and 133 to 138; that span reads IGDFVV.

This sequence belongs to the RNA methyltransferase TrmD family. Homodimer.

The protein resides in the cytoplasm. It catalyses the reaction guanosine(37) in tRNA + S-adenosyl-L-methionine = N(1)-methylguanosine(37) in tRNA + S-adenosyl-L-homocysteine + H(+). Its function is as follows. Specifically methylates guanosine-37 in various tRNAs. This chain is tRNA (guanine-N(1)-)-methyltransferase, found in Neisseria meningitidis serogroup C (strain 053442).